Here is a 189-residue protein sequence, read N- to C-terminus: Dirigent protein 21 (189 aa).

A signal peptide spans 1 to 19 (MASLYLLLLLPLFLALILA). Residues Asn-72 and Asn-173 are each glycosylated (N-linked (GlcNAc...) asparagine).

The protein belongs to the plant dirigent protein family. As to quaternary structure, homodimer.

Its subcellular location is the secreted. Functionally, dirigent proteins impart stereoselectivity on the phenoxy radical-coupling reaction, yielding optically active lignans from two molecules of coniferyl alcohol in the biosynthesis of lignans, flavonolignans, and alkaloids and thus plays a central role in plant secondary metabolism. The chain is Dirigent protein 21 (DIR21) from Arabidopsis thaliana (Mouse-ear cress).